The primary structure comprises 286 residues: Merozoite surface protein 2 (286 aa).

The N-terminal stretch at 1–20 (MKVIKTLSIINFFIFVTFNI) is a signal peptide. 2 N-linked (GlcNAc...) asparagine glycosylation sites follow: Asn22 and Asn36. Positions 43–248 (MTESKTPTPT…SQKECTDGNK (206 aa)) are disordered. A polymorphic region region spans residues 44–212 (TESKTPTPTG…EQTESPELQS (169 aa)). Positions 54–68 (AGAGASGSAGSGDGA) are enriched in gly residues. Residues 59 to 68 (SGSAGSGDGA) form repeat 1. Positions 59 to 106 (SGSAGSGDGASGSASGSASGSASGSAGASGSASGSAGASGSASGSAGA) are 5 X 10 AA tandem repeats of S-G-S-A-[GS]-[GS]-[AD]-G-A. The 2; partial repeat unit spans residues 69–76 (SGSASGSA). Residues 69 to 137 (SGSASGSASG…STSTSSENPN (69 aa)) show a composition bias toward low complexity. 3 consecutive repeat copies span residues 77–86 (SGSASGSAGA), 88–96 (GSASGSAGA), and 97–106 (SGSASGSAGA). Polar residues-rich tracts occupy residues 153 to 179 (KPNQANKETQNNSNVQQDSQTKSNVPP) and 186 to 214 (KSPTAQPEQAENSAPTAEQTESPELQSAP). An N-linked (GlcNAc...) asparagine glycan is attached at Asn163. N-linked (GlcNAc...) asparagine glycosylation is present at Asn235. Positions 239–248 (SQKECTDGNK) are enriched in basic and acidic residues. Cys243 and Cys251 form a disulfide bridge. Asn259 and Asn260 each carry an N-linked (GlcNAc...) asparagine glycan. The GPI-anchor amidated asparagine moiety is linked to residue Asn260. Positions 261–286 (SSNIASINKFVVLISATLVLSFAIFI) are cleaved as a propeptide — removed in mature form.

The protein resides in the cell membrane. Its function is as follows. May play a role in the merozoite attachment to the erythrocyte. This Plasmodium falciparum (isolate 311) protein is Merozoite surface protein 2.